The primary structure comprises 338 residues: Probable cytosolic iron-sulfur protein assembly protein Ciao1 (338 aa).

8 WD repeats span residues 12–51 (GHRG…RWVP), 58–97 (GHTR…FECN), 102–141 (GHEN…EYEC), 147–186 (THSQ…SDWS), 193–232 (SHDS…NEFG), 234–252 (ACPD…LSGF), 253–291 (HSRA…PANE), and 302–338 (AHSQ…EDDE).

The protein belongs to the WD repeat CIA1 family.

Its function is as follows. Essential component of the cytosolic iron-sulfur (Fe/S) protein assembly machinery. Required for the maturation of extramitochondrial Fe/S proteins. In Culex quinquefasciatus (Southern house mosquito), this protein is Probable cytosolic iron-sulfur protein assembly protein Ciao1.